Reading from the N-terminus, the 524-residue chain is MVPQALLFVPLLVFPLCFGKFPIYTIPDKLGPWSPIDIHHLSCPNNLVVEDEGCTNLSGFSYMELKVGYILAIKMNGFTCTGVVTEAENYTNFVGYVTTTFKRKHLRPTPDACRAAYNWKMAGDPRYEESLHNPYPDYSWLRTVKTTKESLVIISPSVADLDPYDRSLHSRVFPSGKCSGVAVSSTYCSTNHDYTIWMPENPRLGKSCDIFTNSRGKRASKGSETCGFVDERGLYKSLKGACKLKLCGVLGLRLMDGTWVAMQTSNETKWCPPDQLVNLHDFRSDEIEHLVVEELVRKREECLDALESIMTTKSVSFRRLSHLRKLVPGFGKAYTIFNKTLMEADAHYKSVRTWNEILPSKGCLRVGGRCHPHVNGVFFNGIILGPDGNVLIPEMQSSLLQQHMELLESSVIPLVHPLADPSTVFKDGDEAEDFVEVHLPDVHNQVSGVDLGLPNWGKYVLLSAGALTALMLIIFLMTCCRRVNRSEPTQHNLRGTGREVSVTPQTWKIISSWESHKSGGETRL.

Positions 1-19 (MVPQALLFVPLLVFPLCFG) are cleaved as a signal peptide. Over 20–459 (KFPIYTIPDK…DLGLPNWGKY (440 aa)) the chain is Virion surface. Cystine bridges form between C43–C302, C54–C226, C80–C113, C178–C188, C208–C247, and C242–C271. N-linked (GlcNAc...) asparagine; by host glycosylation is present at N56. 2 N-linked (GlcNAc...) asparagine; by host glycosylation sites follow: N266 and N338. C363 and C370 are oxidised to a cystine. The chain crosses the membrane as a helical span at residues 460 to 480 (VLLSAGALTALMLIIFLMTCC). Residue C480 is the site of S-palmitoyl cysteine; by host attachment. Residues 481–524 (RRVNRSEPTQHNLRGTGREVSVTPQTWKIISSWESHKSGGETRL) lie on the Intravirion side of the membrane.

It belongs to the lyssavirus glycoprotein family. Homotrimer. Interacts with matrix protein. Interacts with host TRFC. Interacts with host BST2; this interaction inhibits viral budding by tethering new virions to the cell surface. Interacts with ITGB1. Interacts with host GRM2. Post-translationally, glycosylated and palmitoylated by host. Glycosylation is crucial for glycoprotein export at the cell surface.

It localises to the virion membrane. Its function is as follows. Attaches the virus to host cellular receptor, inducing endocytosis of the virion by using different host proteins including TFRC, GRM2 and ITGB1. In the endosome, the acidic pH induces conformational changes in the glycoprotein trimer, which trigger fusion between virus and cell membrane. There is convincing in vitro evidence that the muscular form of the nicotinic acetylcholine receptor (nAChR), the neuronal cell adhesion molecule (NCAM), and the p75 neurotrophin receptor (p75NTR) bind glycoprotein and thereby facilitate rabies virus entry into cells. The protein is Glycoprotein (G) of Rabies virus (strain Vnukovo-32) (RABV).